Consider the following 261-residue polypeptide: Transmembrane protein 106A (261 aa).

Residues 1–23 (MGKAVSQLTSRKDEDKPILPDNP) are disordered. Residues 93–113 (LFVFLSVAICLLIFSLTIFFL) traverse the membrane as a helical segment.

This sequence belongs to the TMEM106 family. As to expression, expressed in liver, spleen, lung, kidney, lymph nodes and adipose tissue (at protein level). Expressed by macrophages.

It is found in the cell membrane. Its function is as follows. Activates macrophages and polarizes them into M1-like macrophages through the activation of the MAPK and NF-kappaB signaling pathway. Upon activation, up-regulates the expression of CD80, CD86, CD69 and MHC II on macrophages, and induces the release of pro-inflammatory cytokines such as TNF, IL1B, IL6, CCL2 and nitric oxide. May play a role in inhibition of proliferation and migration. The chain is Transmembrane protein 106A (Tmem106a) from Mus musculus (Mouse).